A 196-amino-acid chain; its full sequence is Large ribosomal subunit protein eL15 (196 aa).

A compositionally biased stretch (basic residues) spans 162–172; that stretch reads RGKTSAGRRAR. The segment at 162 to 196 is disordered; that stretch reads RGKTSAGRRARGLQNRGKGTEGLRPSTNADKRNKS.

This sequence belongs to the eukaryotic ribosomal protein eL15 family.

The polypeptide is Large ribosomal subunit protein eL15 (Halobacterium salinarum (strain ATCC 29341 / DSM 671 / R1)).